Here is a 428-residue protein sequence, read N- to C-terminus: GTPase Obg (428 aa).

One can recognise an Obg domain in the interval 1–158 (MFVDQVKVYV…RDVILELKVL (158 aa)). The interval 118–145 (KGGRGGRGNSRFATPANPAPQLSENGEP) is disordered. Residues 159–329 (ADVGLVGFPS…LLFEIANQLE (171 aa)) enclose the OBG-type G domain. GTP-binding positions include 165–172 (GFPSVGKS), 190–194 (FTTLV), 212–215 (DLPG), 282–285 (NKMD), and 310–312 (SAI). 2 residues coordinate Mg(2+): S172 and T192. The 79-residue stretch at 350 to 428 (RFDEGDAPFE…LLEFEFEFID (79 aa)) folds into the OCT domain.

It belongs to the TRAFAC class OBG-HflX-like GTPase superfamily. OBG GTPase family. Monomer. Requires Mg(2+) as cofactor.

The protein resides in the cytoplasm. Functionally, an essential GTPase which binds GTP, GDP and possibly (p)ppGpp with moderate affinity, with high nucleotide exchange rates and a fairly low GTP hydrolysis rate. Plays a role in control of the cell cycle, stress response, ribosome biogenesis and in those bacteria that undergo differentiation, in morphogenesis control. This Bacillus pumilus (strain SAFR-032) protein is GTPase Obg.